Here is a 119-residue protein sequence, read N- to C-terminus: Putative nitrilase-like protein YIL165C (119 aa).

Positions 1 to 82 (MKNIAYEGRL…EGLLTAEINT (82 aa)) constitute a CN hydrolase domain. The active-site Proton acceptor is the Asp21.

The protein belongs to the carbon-nitrogen hydrolase superfamily. Nitrilase family.

This Saccharomyces cerevisiae (strain ATCC 204508 / S288c) (Baker's yeast) protein is Putative nitrilase-like protein YIL165C.